Consider the following 254-residue polypeptide: Inner membrane protein YabI (254 aa).

The Periplasmic portion of the chain corresponds to 1–7; it reads MQALLEH. The next 2 helical transmembrane spans lie at 8-28 and 29-49; these read FITQSTVYSLMAVVLVAFLES and LALVGLILPGTVLMAGLGALI. Residues 50–58 are Periplasmic-facing; it reads GSGELSFWH. Residues 59–79 traverse the membrane as a helical segment; sequence AWLAGIIGCLMGDWISFWLGW. Residues 80-144 lie on the Cytoplasmic side of the membrane; it reads RFKKPLHRWS…LPVAKFITPN (65 aa). A helical transmembrane segment spans residues 145 to 165; it reads IIGCLLWPPFYFLPGILAGAA. Topologically, residues 166–178 are periplasmic; sequence IDIPAGMQSGEFK. Residues 179-199 traverse the membrane as a helical segment; it reads WLLLATAVFLWVGGWLCWRLW. Topologically, residues 200 to 215 are cytoplasmic; it reads RSGKATDRLSHYLSRG. The chain crosses the membrane as a helical span at residues 216 to 236; that stretch reads RLLWLTPLISAIGVVALVVLI. The Periplasmic portion of the chain corresponds to 237–254; that stretch reads RHPLMPVYIDILRKVVGV.

Belongs to the DedA family.

The protein resides in the cell inner membrane. This is Inner membrane protein YabI (yabI) from Escherichia coli (strain K12).